Reading from the N-terminus, the 1493-residue chain is Mitogen-activated protein kinase kinase kinase 1 (1493 aa).

Composition is skewed to low complexity over residues M1–E23 and G33–G42. Disordered regions lie at residues M1–E171 and L222–S295. Residue A2 is modified to N-acetylalanine. At S21 the chain carries Phosphoserine. Residues P84 to E94 are compositionally biased toward pro residues. 2 stretches are compositionally biased toward low complexity: residues P95–A108 and A135–G151. Position 137 is a phosphoserine (S137). Basic and acidic residues predominate over residues R152–E171. The span at S230–P257 shows a compositional bias: low complexity. S265 bears the Phosphoserine mark. T275 is subject to Phosphothreonine. S282, S287, and S290 each carry phosphoserine. The SWIM-type zinc finger occupies Y328–F356. The segment at C433–R482 adopts an RING-type zinc-finger fold. The segment covering S496–R506 has biased composition (polar residues). Disordered regions lie at residues S496 to R524, D866 to S910, V923 to S955, and P992 to N1060. Phosphoserine occurs at positions 497, 521, and 910. The span at G507–Q522 shows a compositional bias: low complexity. 2 stretches are compositionally biased toward polar residues: residues L925 to T940 and A998 to C1014. Phosphoserine is present on residues S999 and S1024. Positions G1049–N1060 are enriched in polar residues. The Protein kinase domain occupies W1224–F1489. ATP-binding positions include I1230–C1238 and K1253. The active-site Proton acceptor is the D1350. T1381 and T1393 each carry phosphothreonine; by autocatalysis.

The protein belongs to the protein kinase superfamily. STE Ser/Thr protein kinase family. MAP kinase kinase kinase subfamily. In terms of assembly, binds both upstream activators and downstream substrates in multimolecular complexes through its N-terminus. Oligomerizes after binding MAP4K2 or TRAF2. Interacts (via the kinase catalytic domain) with STK38. Interacts with GRIPAP1. The cofactor is Mg(2+). Autophosphorylated. In terms of tissue distribution, most highly expressed in spleen, kidney and lung.

The protein resides in the membrane. It catalyses the reaction L-seryl-[protein] + ATP = O-phospho-L-seryl-[protein] + ADP + H(+). It carries out the reaction L-threonyl-[protein] + ATP = O-phospho-L-threonyl-[protein] + ADP + H(+). With respect to regulation, activated by autophosphorylation on Thr-1381 and Thr-1393 following oligomerization. Its function is as follows. Component of a protein kinase signal transduction cascade. Activates the ERK and JNK kinase pathways by phosphorylation of MAP2K1 and MAP2K4. May phosphorylate the MAPK8/JNK1 kinase. Activates CHUK and IKBKB, the central protein kinases of the NF-kappa-B pathway. This is Mitogen-activated protein kinase kinase kinase 1 (Map3k1) from Rattus norvegicus (Rat).